Reading from the N-terminus, the 224-residue chain is UPF0111 protein CPn_0681/CP_0066/CPj0681/CpB0708 (224 aa).

It belongs to the UPF0111 family.

The polypeptide is UPF0111 protein CPn_0681/CP_0066/CPj0681/CpB0708 (Chlamydia pneumoniae (Chlamydophila pneumoniae)).